A 691-amino-acid chain; its full sequence is Guanylate cyclase soluble subunit alpha-1 (691 aa).

Positions P26 to T65 are disordered. In terms of domain architecture, Guanylate cyclase spans T482 to E609.

Belongs to the adenylyl cyclase class-4/guanylyl cyclase family. As to quaternary structure, heterodimer of an alpha and a beta chain.

Its subcellular location is the cytoplasm. It carries out the reaction GTP = 3',5'-cyclic GMP + diphosphate. With respect to regulation, activated by nitric oxide in the presence of magnesium or manganese ions. The sequence is that of Guanylate cyclase soluble subunit alpha-1 (GUCY1A1) from Bos taurus (Bovine).